The primary structure comprises 1090 residues: Pullulanase (1090 aa).

A signal peptide spans 1 to 19 (MLRYTRNALVLGSLVLLSG). Cys-20 carries N-palmitoyl cysteine lipidation. The S-diacylglycerol cysteine moiety is linked to residue Cys-20. Asp-684 serves as the catalytic Nucleophile. Glu-713 functions as the Proton donor in the catalytic mechanism.

Belongs to the glycosyl hydrolase 13 family. In terms of assembly, homotrimer.

Its subcellular location is the cell membrane. It catalyses the reaction Hydrolysis of (1-&gt;6)-alpha-D-glucosidic linkages in pullulan, amylopectin and glycogen, and in the alpha- and beta-limit dextrins of amylopectin and glycogen.. This Klebsiella pneumoniae protein is Pullulanase (pulA).